Here is a 697-residue protein sequence, read N- to C-terminus: Ion-translocating oxidoreductase complex subunit C (697 aa).

4Fe-4S ferredoxin-type domains follow at residues 366–397 and 407–436; these read AEMG…QQLY and KARN…VQYY. [4Fe-4S] cluster is bound by residues Cys377, Cys380, Cys383, Cys387, Cys416, Cys419, Cys422, and Cys426. Residues 576 to 674 are disordered; sequence AQLESEPVKS…APEEDPRKAA (99 aa). Over residues 581-596 the composition is skewed to basic and acidic residues; sequence EPVKSESEAPEEDPRK. Residues 597-615 are compositionally biased toward low complexity; that stretch reads AAVAAAIARVKAKKAAQAQ. Positions 619 to 634 are enriched in basic and acidic residues; sequence EPVKSESEAPEEDPRK. The segment covering 635–653 has biased composition (low complexity); the sequence is AAVAAAIARVKAKKAAQAQ. The segment covering 657-672 has biased composition (basic and acidic residues); sequence EPVKSESEAPEEDPRK.

Belongs to the 4Fe4S bacterial-type ferredoxin family. RnfC subfamily. In terms of assembly, the complex is composed of six subunits: RnfA, RnfB, RnfC, RnfD, RnfE and RnfG. The cofactor is [4Fe-4S] cluster.

It is found in the cell inner membrane. Its function is as follows. Part of a membrane-bound complex that couples electron transfer with translocation of ions across the membrane. The sequence is that of Ion-translocating oxidoreductase complex subunit C from Yersinia enterocolitica serotype O:8 / biotype 1B (strain NCTC 13174 / 8081).